The following is a 142-amino-acid chain: ATP synthase epsilon chain (142 aa).

Belongs to the ATPase epsilon chain family. In terms of assembly, F-type ATPases have 2 components, CF(1) - the catalytic core - and CF(0) - the membrane proton channel. CF(1) has five subunits: alpha(3), beta(3), gamma(1), delta(1), epsilon(1). CF(0) has three main subunits: a, b and c.

Its subcellular location is the cell inner membrane. Produces ATP from ADP in the presence of a proton gradient across the membrane. This is ATP synthase epsilon chain from Coxiella burnetii (strain CbuK_Q154) (Coxiella burnetii (strain Q154)).